The primary structure comprises 565 residues: NAD-dependent malic enzyme (565 aa).

Tyr104 serves as the catalytic Proton donor. Arg157 is a binding site for NAD(+). Catalysis depends on Lys175, which acts as the Proton acceptor. The a divalent metal cation site is built by Glu246, Asp247, and Asp270. Residues Asp270 and Asn418 each contribute to the NAD(+) site.

Belongs to the malic enzymes family. As to quaternary structure, homotetramer. Mg(2+) serves as cofactor. It depends on Mn(2+) as a cofactor.

It carries out the reaction (S)-malate + NAD(+) = pyruvate + CO2 + NADH. It catalyses the reaction oxaloacetate + H(+) = pyruvate + CO2. This chain is NAD-dependent malic enzyme, found in Salmonella newport (strain SL254).